The chain runs to 235 residues: tRNA pseudouridine synthase B (235 aa).

The Nucleophile role is filled by aspartate 45.

Belongs to the pseudouridine synthase TruB family. Type 1 subfamily.

The enzyme catalyses uridine(55) in tRNA = pseudouridine(55) in tRNA. In terms of biological role, responsible for synthesis of pseudouridine from uracil-55 in the psi GC loop of transfer RNAs. This is tRNA pseudouridine synthase B from Chlamydia abortus (strain DSM 27085 / S26/3) (Chlamydophila abortus).